We begin with the raw amino-acid sequence, 685 residues long: MKPLLLLPLLGCLATIASCIDTVKWCVTSTKENLKCTALAAAAPVFSCVARASITDCLTAIKAGEADAITLDGGEIYTAGLDEYKLHPIIAEQYGTSTDTCYYAVAVAKKNTGFGLHQLMGKKSCHTGVGKSAGWNIPIGTLLSMDFIKWKGSDDKKLEEVVGEFFHSSCAPGATDSANLCKLCIGDCSKSSETEPYYNYHGAFQCLKDGKGDVAFVKHLTVPEEEKNDYELLCKDNTRKPIDQFENCDLAKVPSHAVVTRKDNEELAQFIWQSLSSVKNFNLFSSTPYGGKNLMFKDSTTTLVQLPLNVDHTMYLGPHYLESVKALKIVNIPSTTSDAMKWCAVGRSESDKCDSWSVASLVQDGTTIDCIKGNTVDDCLKKIMHKEADAMAVDGGQVYTAGKCGLVPAMVEQYDQGQCSAPGAARLYYAVAVIKKGSGVTWENLRNKRSCHTGIGRNAGWNIPMGLIYEQTKNCNFSAFFSSSCAPGADPSSQLCAQCAGNAESINKCKASNEERYYAYAGAFRCLAEGKGDVAFVKHSIVKENTDGQGPEWAKAFLSNDYELICPSKGPVSVENFMSCNLAKVNAHAVVTRPEIRTKVVTFLNNQQSHFGNSASEESFKMFTSPDGENLLFKYSTKCLQEIPAHLDYKGFLGQEYMTVMSSLRTCKESTSDLEQLCTYNMCQT.

The first 16 residues, 1 to 16, serve as a signal peptide directing secretion; the sequence is MKPLLLLPLLGCLATI. Transferrin-like domains follow at residues 23-329 and 340-666; these read VKWC…ALKI and MKWC…SLRT. A disulfide bond links C26 and C48. 2 residues coordinate Fe(3+): D72 and Y102. 3 disulfides stabilise this stretch: C125–C206, C170–C184, and C234–C248. The hydrogencarbonate site is built by T127, K131, A133, and G134. Residue Y200 coordinates Fe(3+). H256 provides a ligand contact to Fe(3+). Intrachain disulfides connect C343–C379 and C353–C370. Fe(3+) contacts are provided by D394 and Y428. 7 disulfides stabilise this stretch: C404-C678, C419-C639, C451-C526, C475-C667, C485-C499, C496-C509, and C566-C580. Hydrogencarbonate is bound by residues T453, R457, A459, and G460. N476 carries an N-linked (GlcNAc...) asparagine glycan. Y520 provides a ligand contact to Fe(3+). Residue H588 participates in Fe(3+) binding.

The protein belongs to the transferrin family. Monomer.

Its subcellular location is the secreted. Transferrins are iron binding transport proteins which can bind two Fe(3+) ions in association with the binding of an anion, usually bicarbonate. This chain is Serotransferrin (tf), found in Paralichthys olivaceus (Bastard halibut).